The primary structure comprises 161 residues: Small ribosomal subunit protein uS9 (161 aa).

Disordered stretches follow at residues 1–28 (MAQI…PKAP) and 142–161 (KERK…FSKR).

This sequence belongs to the universal ribosomal protein uS9 family.

The chain is Small ribosomal subunit protein uS9 from Clavibacter sepedonicus (Clavibacter michiganensis subsp. sepedonicus).